A 280-amino-acid chain; its full sequence is Large ribosomal subunit protein uL2 (280 aa).

Disordered stretches follow at residues 1–47 and 224–280; these read MAIR…NVHG and VVMN…SKKR. Residues 23–33 show a composition bias toward basic and acidic residues; the sequence is EITRSTPEKSL. Basic residues predominate over residues 37–47; sequence LPKKGGRNVHG. The span at 258–268 shows a compositional bias: polar residues; sequence RNPNRYSNNMI. Over residues 270–280 the composition is skewed to basic residues; it reads QRRRTNKSKKR.

The protein belongs to the universal ribosomal protein uL2 family. As to quaternary structure, part of the 50S ribosomal subunit. Forms a bridge to the 30S subunit in the 70S ribosome.

Its function is as follows. One of the primary rRNA binding proteins. Required for association of the 30S and 50S subunits to form the 70S ribosome, for tRNA binding and peptide bond formation. It has been suggested to have peptidyltransferase activity; this is somewhat controversial. Makes several contacts with the 16S rRNA in the 70S ribosome. This chain is Large ribosomal subunit protein uL2, found in Corynebacterium diphtheriae (strain ATCC 700971 / NCTC 13129 / Biotype gravis).